The primary structure comprises 273 residues: 2,3,4,5-tetrahydropyridine-2,6-dicarboxylate N-succinyltransferase (273 aa).

R105 and D142 together coordinate substrate.

The protein belongs to the transferase hexapeptide repeat family. In terms of assembly, homotrimer.

Its subcellular location is the cytoplasm. It carries out the reaction (S)-2,3,4,5-tetrahydrodipicolinate + succinyl-CoA + H2O = (S)-2-succinylamino-6-oxoheptanedioate + CoA. Its pathway is amino-acid biosynthesis; L-lysine biosynthesis via DAP pathway; LL-2,6-diaminopimelate from (S)-tetrahydrodipicolinate (succinylase route): step 1/3. This is 2,3,4,5-tetrahydropyridine-2,6-dicarboxylate N-succinyltransferase from Bordetella parapertussis (strain 12822 / ATCC BAA-587 / NCTC 13253).